A 205-amino-acid polypeptide reads, in one-letter code: GTP cyclohydrolase-2 (205 aa).

49-53 is a binding site for GTP; the sequence is RIHSE. Residues cysteine 54, cysteine 65, and cysteine 67 each coordinate Zn(2+). GTP contacts are provided by residues glutamine 70, 92-94, and threonine 114; that span reads EGR. Aspartate 126 functions as the Proton acceptor in the catalytic mechanism. Arginine 128 acts as the Nucleophile in catalysis. 2 residues coordinate GTP: threonine 149 and lysine 154.

Belongs to the GTP cyclohydrolase II family. The cofactor is Zn(2+).

The enzyme catalyses GTP + 4 H2O = 2,5-diamino-6-hydroxy-4-(5-phosphoribosylamino)-pyrimidine + formate + 2 phosphate + 3 H(+). Its pathway is cofactor biosynthesis; riboflavin biosynthesis; 5-amino-6-(D-ribitylamino)uracil from GTP: step 1/4. Functionally, catalyzes the conversion of GTP to 2,5-diamino-6-ribosylamino-4(3H)-pyrimidinone 5'-phosphate (DARP), formate and pyrophosphate. This chain is GTP cyclohydrolase-2, found in Shewanella piezotolerans (strain WP3 / JCM 13877).